The following is a 140-amino-acid chain: Cystatin-C (140 aa).

The N-terminal stretch at 1-20 is a signal peptide; the sequence is MASPLRSLLFLLAVLAVAWA. The short motif at 75–79 is the Secondary area of contact element; that stretch reads QLVAG. 2 cysteine pairs are disulfide-bonded: Cys-93/Cys-103 and Cys-117/Cys-137.

It belongs to the cystatin family.

The protein localises to the secreted. As an inhibitor of cysteine proteinases, this protein is thought to serve an important physiological role as a local regulator of this enzyme activity. This chain is Cystatin-C (Cst3), found in Mus musculus (Mouse).